The primary structure comprises 434 residues: Probable phosphoglucosamine mutase (434 aa).

The active-site Phosphoserine intermediate is the serine 91. The Mg(2+) site is built by serine 91, aspartate 229, aspartate 231, and aspartate 233. Serine 91 bears the Phosphoserine mark.

Belongs to the phosphohexose mutase family. Mg(2+) is required as a cofactor. Activated by phosphorylation.

The enzyme catalyses alpha-D-glucosamine 1-phosphate = D-glucosamine 6-phosphate. Its function is as follows. Catalyzes the conversion of glucosamine-6-phosphate to glucosamine-1-phosphate. The sequence is that of Probable phosphoglucosamine mutase from Methanosarcina barkeri (strain Fusaro / DSM 804).